The sequence spans 284 residues: ATP synthase subunit beta, chloroplastic (284 aa).

The protein belongs to the ATPase alpha/beta chains family. F-type ATPases have 2 components, CF(1) - the catalytic core - and CF(0) - the membrane proton channel. CF(1) has five subunits: alpha(3), beta(3), gamma(1), delta(1), epsilon(1). CF(0) has four main subunits: a(1), b(1), b'(1) and c(9-12).

It is found in the plastid. It localises to the chloroplast thylakoid membrane. It carries out the reaction ATP + H2O + 4 H(+)(in) = ADP + phosphate + 5 H(+)(out). Its function is as follows. Produces ATP from ADP in the presence of a proton gradient across the membrane. The catalytic sites are hosted primarily by the beta subunits. This chain is ATP synthase subunit beta, chloroplastic (atpB), found in Asplenium nidus (Bird's nest fern).